A 437-amino-acid polypeptide reads, in one-letter code: Enolase-related protein 1 (437 aa).

Substrate is bound by residues histidine 160 and glutamate 169. Residue glutamate 212 is the Proton donor of the active site. The Mg(2+) site is built by aspartate 247, glutamate 296, and aspartate 321. 2 residues coordinate substrate: glutamate 296 and aspartate 321. Residue lysine 346 is the Proton acceptor of the active site. Substrate contacts are provided by residues serine 373–serine 376 and lysine 397.

Belongs to the enolase family. It depends on Mg(2+) as a cofactor.

It catalyses the reaction (2R)-2-phosphoglycerate = phosphoenolpyruvate + H2O. The protein operates within carbohydrate degradation; glycolysis; pyruvate from D-glyceraldehyde 3-phosphate: step 4/5. This is Enolase-related protein 1 (ERR1) from Saccharomyces cerevisiae (strain ATCC 204508 / S288c) (Baker's yeast).